The following is a 161-amino-acid chain: UPF0178 protein PXO_00400 (161 aa).

It belongs to the UPF0178 family.

The sequence is that of UPF0178 protein PXO_00400 from Xanthomonas oryzae pv. oryzae (strain PXO99A).